Here is a 190-residue protein sequence, read N- to C-terminus: GATA transcription factor 17 (190 aa).

The span at 1–14 shows a compositional bias: basic and acidic residues; the sequence is MSEGSEDTKTKLDS. 2 disordered regions span residues 1-42 and 77-101; these read MSEG…DTKR and RQAA…NDLN. A GATA-type zinc finger spans residues 38-92; sequence GDTKRTCVDCGTIRTPLWRGGPAGPKSLCNACGIKSRKKRQAALGMRSEEKKKNR.

It belongs to the type IV zinc-finger family. Class B subfamily.

The protein localises to the nucleus. Functionally, transcriptional regulator that specifically binds 5'-GATA-3' or 5'-GAT-3' motifs within gene promoters. This Arabidopsis thaliana (Mouse-ear cress) protein is GATA transcription factor 17 (GATA17).